We begin with the raw amino-acid sequence, 276 residues long: Nickel import system permease protein NikC (276 aa).

The next 5 helical transmembrane spans lie at 10-30 (LIFFVFVAFIFVVIVLQFFVS), 73-93 (LFVTVLTLIAIVVIGVTLGLF), 108-128 (FIDVGLSIPEFIIMIALASFF), 186-206 (IIPAIIVLMVVDFGKIILYIS), and 238-258 (IMLIAPASVIAITILIFNLTG). The 190-residue stretch at 69–258 (ARSTLFVTVL…ITILIFNLTG (190 aa)) folds into the ABC transmembrane type-1 domain.

The protein belongs to the binding-protein-dependent transport system permease family. OppBC subfamily. In terms of assembly, the complex is composed of two ATP-binding proteins (NikD and NikE), two transmembrane proteins (NikB and NikC) and a solute-binding protein (NikA).

It is found in the cell membrane. Functionally, part of the ABC transporter complex NikABCDE (Opp2) involved in nickel import. Probably responsible for the translocation of the substrate across the membrane. In Staphylococcus aureus (strain Mu50 / ATCC 700699), this protein is Nickel import system permease protein NikC.